The chain runs to 104 residues: Pole-localizer protein TmaR (104 aa).

2 coiled-coil regions span residues 13-43 and 76-96; these read RKNK…NLLD and SAEI…LTEE.

The protein belongs to the pole-localizer TmaR family.

The protein resides in the cytoplasm. In terms of biological role, pole-localizer protein involved in the regulation of several cellular processes. The chain is Pole-localizer protein TmaR from Vibrio vulnificus (strain CMCP6).